A 330-amino-acid chain; its full sequence is DNA-directed RNA polymerase subunit alpha (330 aa).

The alpha N-terminal domain (alpha-NTD) stretch occupies residues 1-229 (MKNIKFIKPF…DHFNVLVELS (229 aa)). An alpha C-terminal domain (alpha-CTD) region spans residues 245–330 (AHNSVLDLEI…HSVEEDKDKH (86 aa)).

Belongs to the RNA polymerase alpha chain family. Homodimer. The RNAP catalytic core consists of 2 alpha, 1 beta, 1 beta' and 1 omega subunit. When a sigma factor is associated with the core the holoenzyme is formed, which can initiate transcription.

The enzyme catalyses RNA(n) + a ribonucleoside 5'-triphosphate = RNA(n+1) + diphosphate. Its function is as follows. DNA-dependent RNA polymerase catalyzes the transcription of DNA into RNA using the four ribonucleoside triphosphates as substrates. This chain is DNA-directed RNA polymerase subunit alpha, found in Onion yellows phytoplasma (strain OY-M).